The sequence spans 830 residues: Receptor-like protein kinase HERK 1 (830 aa).

An N-terminal signal peptide occupies residues 1-24 (MGIEKFETFILISTISILLCICHG). Topologically, residues 25-405 (FTPVDNYLIN…SSSSSKSNLG (381 aa)) are extracellular. 5 N-linked (GlcNAc...) asparagine glycosylation sites follow: Asn40, Asn146, Asn217, Asn280, and Asn381. Residues 406 to 426 (LIVGSAIGSLLAVVFLGSCFV) form a helical membrane-spanning segment. Over 427–830 (LYKKRKRGQD…FSQLVKSEGR (404 aa)) the chain is Cytoplasmic. Residues 485–758 (FDESRNIGVG…GDVLWNLEYA (274 aa)) form the Protein kinase domain. ATP is bound by residues 491–499 (IGVGGFGKV) and Lys513. Asp609 serves as the catalytic Proton acceptor.

Belongs to the protein kinase superfamily. Ser/Thr protein kinase family. Post-translationally, autophosphorylated. In terms of tissue distribution, expressed in most vegetative tissues, including leaves, stems and roots, especially in cell elongation regions.

Its subcellular location is the cell membrane. Its function is as follows. Receptor-like protein kinase required for cell elongation during vegetative growth, mostly in a brassinosteroid-(BR-) independent manner. The chain is Receptor-like protein kinase HERK 1 (HERK1) from Arabidopsis thaliana (Mouse-ear cress).